The primary structure comprises 747 residues: Protein PHTF2 (747 aa).

Positions 6-153 (TDAIVWYQKK…VHCQIVSTRT (148 aa)) constitute a PHTF domain. A run of 2 helical transmembrane segments spans residues 98–118 (VIFS…VLFC) and 126–146 (IPLT…TVHC). Disordered regions lie at residues 170-192 (KAAH…TQEG) and 268-365 (EDAA…SETE). The segment covering 172–181 (AHLEVHREGD) has biased composition (basic and acidic residues). Positions 182-192 (GSSTTDNTQEG) are enriched in polar residues. N291 carries N-linked (GlcNAc...) asparagine glycosylation. Basic residues predominate over residues 321–331 (RNRKPHHYKKH). The segment covering 340–352 (SGTSCSSRCSSSR) has biased composition (low complexity). The span at 353–362 (QDSESTRPES) shows a compositional bias: basic and acidic residues. The next 4 membrane-spanning stretches (helical) occupy residues 459–479 (IGYQ…PFVF), 515–535 (VLIS…LLCV), 596–616 (VIVS…CAQL), and 630–650 (WELV…VTLG). N-linked (GlcNAc...) asparagine glycans are attached at residues N659 and N718. Residues 722-742 (VVILSAVSGVISDLLGFNLKL) form a helical membrane-spanning segment.

The protein localises to the membrane. In Mus musculus (Mouse), this protein is Protein PHTF2 (Phtf2).